The sequence spans 879 residues: Valine--tRNA ligase (879 aa).

The 'HIGH' region signature appears at 45 to 55 (PNVTGKLHLGH). The 'KMSKS' region motif lies at 521-525 (KMSKS). Position 524 (Lys524) interacts with ATP. Residues 806–879 (LTELVNVDEE…ERIQDLKESK (74 aa)) adopt a coiled-coil conformation.

It belongs to the class-I aminoacyl-tRNA synthetase family. ValS type 1 subfamily. In terms of assembly, monomer.

The protein localises to the cytoplasm. The catalysed reaction is tRNA(Val) + L-valine + ATP = L-valyl-tRNA(Val) + AMP + diphosphate. Catalyzes the attachment of valine to tRNA(Val). As ValRS can inadvertently accommodate and process structurally similar amino acids such as threonine, to avoid such errors, it has a 'posttransfer' editing activity that hydrolyzes mischarged Thr-tRNA(Val) in a tRNA-dependent manner. In Lactobacillus acidophilus (strain ATCC 700396 / NCK56 / N2 / NCFM), this protein is Valine--tRNA ligase.